Here is a 113-residue protein sequence, read N- to C-terminus: uncharacterized protein (113 aa).

This is an uncharacterized protein from Methanocaldococcus jannaschii (strain ATCC 43067 / DSM 2661 / JAL-1 / JCM 10045 / NBRC 100440) (Methanococcus jannaschii).